Consider the following 148-residue polypeptide: Large ribosomal subunit protein bL19 (148 aa).

Belongs to the bacterial ribosomal protein bL19 family.

Its function is as follows. This protein is located at the 30S-50S ribosomal subunit interface and may play a role in the structure and function of the aminoacyl-tRNA binding site. This chain is Large ribosomal subunit protein bL19, found in Beijerinckia indica subsp. indica (strain ATCC 9039 / DSM 1715 / NCIMB 8712).